Reading from the N-terminus, the 1270-residue chain is DNA-directed RNA polymerase subunit beta (1270 aa).

The protein belongs to the RNA polymerase beta chain family. The RNAP catalytic core consists of 2 alpha, 1 beta, 1 beta' and 1 omega subunit. When a sigma factor is associated with the core the holoenzyme is formed, which can initiate transcription.

The catalysed reaction is RNA(n) + a ribonucleoside 5'-triphosphate = RNA(n+1) + diphosphate. DNA-dependent RNA polymerase catalyzes the transcription of DNA into RNA using the four ribonucleoside triphosphates as substrates. This chain is DNA-directed RNA polymerase subunit beta, found in Phocaeicola vulgatus (strain ATCC 8482 / DSM 1447 / JCM 5826 / CCUG 4940 / NBRC 14291 / NCTC 11154) (Bacteroides vulgatus).